We begin with the raw amino-acid sequence, 228 residues long: Heat shock 70-related protein 4 (228 aa).

Positions 57–80 (RWHEPPGNTVFDEAHDRPQVRRPD) are disordered. Residues 68–80 (DEAHDRPQVRRPD) are compositionally biased toward basic and acidic residues.

Belongs to the heat shock protein 70 family.

This chain is Heat shock 70-related protein 4 (HSP70.4), found in Leishmania major.